Reading from the N-terminus, the 175-residue chain is Adenine phosphoribosyltransferase (175 aa).

Belongs to the purine/pyrimidine phosphoribosyltransferase family. As to quaternary structure, homodimer.

It localises to the cytoplasm. It catalyses the reaction AMP + diphosphate = 5-phospho-alpha-D-ribose 1-diphosphate + adenine. It participates in purine metabolism; AMP biosynthesis via salvage pathway; AMP from adenine: step 1/1. Functionally, catalyzes a salvage reaction resulting in the formation of AMP, that is energically less costly than de novo synthesis. The sequence is that of Adenine phosphoribosyltransferase from Pelagibacter ubique (strain HTCC1062).